Here is a 137-residue protein sequence, read N- to C-terminus: Cell division protein SepF (137 aa).

The protein belongs to the SepF family. Homodimer. Interacts with FtsZ.

It localises to the cytoplasm. In terms of biological role, cell division protein that is part of the divisome complex and is recruited early to the Z-ring. Probably stimulates Z-ring formation, perhaps through the cross-linking of FtsZ protofilaments. Its function overlaps with FtsA. The chain is Cell division protein SepF from Carboxydothermus hydrogenoformans (strain ATCC BAA-161 / DSM 6008 / Z-2901).